The primary structure comprises 83 residues: Consomatin Rs1 (83 aa).

Positions 1 to 22 (MQTAYWVMVMMMVWITAPLSEG) are cleaved as a signal peptide. The propeptide occupies 23-55 (GKLNNVIRGLVPDDVTPKRISQSLISRRRFDSR). Cysteines 62 and 67 form a disulfide. A D-tryptophan modification is found at Trp64. Pro68 carries the 4-hydroxyproline modification. Residues 71–83 (LHGDNYDLKEKDK) constitute a propeptide that is removed on maturation.

This sequence belongs to the conotoxin C superfamily. Consomatin family. As to expression, expressed by the venom duct.

The protein localises to the secreted. Moderately activates human somatostatin receptors (SSTR) with a preferential activation of SSTR1 and SSTR4. In vivo, does not cause behavioral changes in mice within a few minutes of intracranial injection, but causes a progressive loss of movement thereafter. Four to five hours after injection, mice recover, even with the highest dose tested. Shows antinociception and antihyperalgesia activities in two mouse models of acute pain, most probably by acting outside the central nervous system. The polypeptide is Consomatin Rs1 (Conus raulsilvai (Sea snail)).